The sequence spans 85 residues: Probable weak neurotoxin 3FTx-Lio1 (85 aa).

Positions 1 to 18 are cleaved as a signal peptide; that stretch reads MKAVILSLVAAFLYSGYT. Disulfide bonds link C21-C42, C24-C29, C35-C60, C64-C75, and C76-C81.

The protein belongs to the three-finger toxin family. Ancestral subfamily. In terms of tissue distribution, expressed by the venom gland.

Its subcellular location is the secreted. In Erythrolamprus poecilogyrus (Water snake), this protein is Probable weak neurotoxin 3FTx-Lio1.